We begin with the raw amino-acid sequence, 327 residues long: Type II methyltransferase M.HhaI (327 aa).

In terms of domain architecture, SAM-dependent MTase C5-type spans 12 to 325 (LRFIDLFAGL…YNIGSSLNFK (314 aa)). Cys-81 is an active-site residue.

The protein belongs to the class I-like SAM-binding methyltransferase superfamily. C5-methyltransferase family. Monomer.

The catalysed reaction is a 2'-deoxycytidine in DNA + S-adenosyl-L-methionine = a 5-methyl-2'-deoxycytidine in DNA + S-adenosyl-L-homocysteine + H(+). In terms of biological role, a methylase, recognizes the double-stranded sequence 5'-GCGC-3', methylates C-2 on both strands, and protects the DNA from cleavage by the HhaI endonuclease. In Haemophilus parahaemolyticus, this protein is Type II methyltransferase M.HhaI (hhaIM).